The sequence spans 79 residues: Acyl carrier protein (79 aa).

In terms of domain architecture, Carrier spans Glu-2–Leu-77. Ser-37 carries the post-translational modification O-(pantetheine 4'-phosphoryl)serine.

Belongs to the acyl carrier protein (ACP) family. 4'-phosphopantetheine is transferred from CoA to a specific serine of apo-ACP by AcpS. This modification is essential for activity because fatty acids are bound in thioester linkage to the sulfhydryl of the prosthetic group.

It is found in the cytoplasm. It participates in lipid metabolism; fatty acid biosynthesis. In terms of biological role, carrier of the growing fatty acid chain in fatty acid biosynthesis. This Laribacter hongkongensis (strain HLHK9) protein is Acyl carrier protein.